Reading from the N-terminus, the 140-residue chain is ATP synthase epsilon chain (140 aa).

Belongs to the ATPase epsilon chain family. F-type ATPases have 2 components, CF(1) - the catalytic core - and CF(0) - the membrane proton channel. CF(1) has five subunits: alpha(3), beta(3), gamma(1), delta(1), epsilon(1). CF(0) has three main subunits: a, b and c.

Its subcellular location is the cell inner membrane. Its function is as follows. Produces ATP from ADP in the presence of a proton gradient across the membrane. The protein is ATP synthase epsilon chain of Legionella pneumophila (strain Lens).